The following is a 1099-amino-acid chain: Inverted formin-2 (1099 aa).

Positions 1 to 330 constitute a GBD/FH3 domain; that stretch reads MSLTEGAHTK…RAVLLADDCQ (330 aa). Composition is skewed to basic and acidic residues over residues 348 to 359 and 367 to 385; these read SSKEKRKTDKCT and QTDK…KKDP. 3 disordered regions span residues 348–391, 432–509, and 1000–1019; these read SSKE…SGIP, PSPP…PTPP, and AEKR…KGEN. The FH1 domain maps to 426–569; that stretch reads TCSSVLPSPP…GMLPPPPPLP (144 aa). A compositionally biased stretch (pro residues) spans 452–499; it reads PLPPPPPPLPGTELSPPPPGMVALSLPPPPPPLPGMGGMLPPPPPPLP. Positions 621-1009 constitute an FH2 domain; the sequence is FLKVNKPTLK…AEKRKQQIAD (389 aa). A coiled-coil region spans residues 907 to 1019; the sequence is LKKLRDLQNK…EETKRQKGEN (113 aa). In terms of domain architecture, WH2 spans 1037 to 1052; it reads DDLLADIKKGFQLRKT. The segment at 1064-1085 is disordered; sequence KTLSSETNRTDIQHVGKRPEVP. Positions 1071–1083 are enriched in basic and acidic residues; it reads NRTDIQHVGKRPE.

Belongs to the formin homology family.

This Xenopus laevis (African clawed frog) protein is Inverted formin-2 (inf2).